A 637-amino-acid polypeptide reads, in one-letter code: Limonene synthase, chloroplastic (637 aa).

Residues 1–56 (MALLSIVSLQVPKSCGLKSLISSSNVQKALCISTAVPTLRMRRRQKALVINMKLTT) constitute a chloroplast transit peptide. Mg(2+)-binding residues include Asp388, Asp392, and Asp540. Residues 388–392 (DDIYD) carry the DDXXD motif motif.

It belongs to the terpene synthase family. Tpsd subfamily. Mg(2+) is required as a cofactor. The cofactor is Mn(2+). It depends on K(+) as a cofactor.

Its subcellular location is the plastid. The protein resides in the chloroplast. It catalyses the reaction (2E)-geranyl diphosphate = (4S)-limonene + diphosphate. It functions in the pathway terpene metabolism; oleoresin biosynthesis. Functionally, involved in defensive oleoresin formation in conifers in response to insect attack or other injury. Involved in monoterpene (C10) olefins biosynthesis. This Abies grandis (Grand fir) protein is Limonene synthase, chloroplastic (ag10).